We begin with the raw amino-acid sequence, 924 residues long: DNA polymerase (924 aa).

The region spanning 235-386 is the 3'-5' exonuclease domain; it reads YPMSQQPKIV…DDCDVTFRLS (152 aa).

Belongs to the DNA polymerase type-A family.

It carries out the reaction DNA(n) + a 2'-deoxyribonucleoside 5'-triphosphate = DNA(n+1) + diphosphate. Functionally, replicates viral genomic DNA. This polymerase possesses two enzymatic activities: DNA synthesis (polymerase) and an exonucleolytic activity that degrades single-stranded DNA in the 3'-5' direction. The polypeptide is DNA polymerase (31) (Bacillus phage SP01 (Bacteriophage SP01)).